A 557-amino-acid polypeptide reads, in one-letter code: Aerobic glycerol-3-phosphate dehydrogenase (557 aa).

21–49 (DLVIIGGGITGAGIALDASERGMKVALVE) contacts FAD.

This sequence belongs to the FAD-dependent glycerol-3-phosphate dehydrogenase family. Requires FAD as cofactor.

Its subcellular location is the cytoplasm. It catalyses the reaction a quinone + sn-glycerol 3-phosphate = dihydroxyacetone phosphate + a quinol. The protein operates within polyol metabolism; glycerol degradation via glycerol kinase pathway; glycerone phosphate from sn-glycerol 3-phosphate (aerobic route): step 1/1. The polypeptide is Aerobic glycerol-3-phosphate dehydrogenase (glpD) (Staphylococcus aureus (strain bovine RF122 / ET3-1)).